The primary structure comprises 125 residues: Small ribosomal subunit protein eS8 (125 aa).

A disordered region spans residues 1–30 (MTIFQGRATRKPSGGKLRPNHSKRRYELGR).

Belongs to the eukaryotic ribosomal protein eS8 family. Part of the 30S ribosomal subunit.

The chain is Small ribosomal subunit protein eS8 from Picrophilus torridus (strain ATCC 700027 / DSM 9790 / JCM 10055 / NBRC 100828 / KAW 2/3).